We begin with the raw amino-acid sequence, 276 residues long: Cell division protein FtsQ (276 aa).

The Cytoplasmic portion of the chain corresponds to 1–11; it reads MQYILKLKYYL. A helical membrane pass occupies residues 12–32; it reads YNITWKLVFICVMLVLLIVGI. Residues 33–276 lie on the Periplasmic side of the membrane; that stretch reads HKNIKWVCDY…NVSKGSHDYD (244 aa). The region spanning 45–115 is the POTRA domain; sequence GPLSYIIVTG…NTLKINLIEY (71 aa).

This sequence belongs to the FtsQ/DivIB family. FtsQ subfamily. As to quaternary structure, part of a complex composed of FtsB, FtsL and FtsQ.

It localises to the cell inner membrane. In terms of biological role, essential cell division protein. May link together the upstream cell division proteins, which are predominantly cytoplasmic, with the downstream cell division proteins, which are predominantly periplasmic. May control correct divisome assembly. The chain is Cell division protein FtsQ from Blochmanniella floridana.